A 578-amino-acid polypeptide reads, in one-letter code: Putative fatty-acid--CoA ligase fadD21 (578 aa).

The protein belongs to the ATP-dependent AMP-binding enzyme family.

In Mycobacterium bovis (strain ATCC BAA-935 / AF2122/97), this protein is Putative fatty-acid--CoA ligase fadD21 (fadD21).